We begin with the raw amino-acid sequence, 149 residues long: UPF0178 protein CPF_2548 (149 aa).

It belongs to the UPF0178 family.

This is UPF0178 protein CPF_2548 from Clostridium perfringens (strain ATCC 13124 / DSM 756 / JCM 1290 / NCIMB 6125 / NCTC 8237 / Type A).